A 725-amino-acid chain; its full sequence is Phosphatase and actin regulator 4A (725 aa).

Polar residues predominate over residues 1–12 (MGQGASTQTLNP). The disordered stretch occupies residues 1-597 (MGQGASTQTL…SSTWNNKEQW (597 aa)). Residues 55–64 (KPWKWRKKKT) are compositionally biased toward basic residues. 3 stretches are compositionally biased toward basic and acidic residues: residues 65–100 (SDKF…KDIP), 124–147 (GDRK…GERK), and 155–164 (KRNDGTERMT). An RPEL 1 repeat occupies 75–100 (LVLERKMSVRKPREELIERGLLKDIP). The segment covering 166–177 (MIQSFQKMSLMQ) has biased composition (polar residues). Residues 212–221 (VIAAPSSAEP) show a composition bias toward low complexity. The span at 222-235 (APVPPPPIAKPPPR) shows a compositional bias: pro residues. Composition is skewed to low complexity over residues 265-276 (PAHTTPATVSTH) and 292-313 (PAHV…LLKQ). Over residues 359-368 (TPVTKRNSGD) the composition is skewed to polar residues. Residues 374 to 384 (PEPPPPAPTSV) show a composition bias toward pro residues. Over residues 385–401 (PIPAAAPISAPPSTQSD) the composition is skewed to low complexity. A compositionally biased stretch (pro residues) spans 402–417 (PPSPTTEPPSQPPPLP). Residues 497-510 (QKPELEPRSRRGLV) show a composition bias toward basic and acidic residues. Acidic residues-rich tracts occupy residues 522–536 (AGSE…ESDS) and 545–554 (DNEEDDDEED). Over residues 567 to 585 (KDTLALKLERQQEKEKSQE) the composition is skewed to basic and acidic residues. RPEL repeat units follow at residues 606–631 (TALT…LAKN) and 644–669 (RRLT…RFHE).

It belongs to the phosphatase and actin regulator family. Binds ppp1ca and actin.

It is found in the cytoplasm. Its subcellular location is the cell projection. The protein resides in the lamellipodium. In terms of biological role, regulator of protein phosphatase 1 (PP1) required for neural tube and optic fissure closure, and enteric neural crest cell (ENCCs) migration during development. Acts as an activator of PP1. During neural tube closure, localizes to the ventral neural tube and activates PP1, leading to down-regulate cell proliferation within cranial neural tissue and the neural retina. Also acts as a regulator of migration of enteric neural crest cells (ENCCs) by activating PP1, leading to repression of the integrin signaling through the rho/rock pathway. In Danio rerio (Zebrafish), this protein is Phosphatase and actin regulator 4A (phactr4a).